Consider the following 340-residue polypeptide: Anthocyanidin reductase (340 aa).

The NADP(+) site is built by K49 and Y169.

It belongs to the NAD(P)-dependent epimerase/dehydratase family. Dihydroflavonol-4-reductase subfamily. Homo- or heterodimer. As to expression, flowers and young siliques. Detected specifically in the endothelium of seed coat.

The enzyme catalyses a (2R,3R)-flavan-3-ol + 2 NAD(+) = an anthocyanidin with a 3-hydroxy group + 2 NADH + 2 H(+). The catalysed reaction is a (2R,3R)-flavan-3-ol + 2 NADP(+) = an anthocyanidin with a 3-hydroxy group + 2 NADPH + 2 H(+). It functions in the pathway secondary metabolite biosynthesis; flavonoid biosynthesis. With respect to regulation, inhibited by (+)-catechin, quercetin and (+)- and (-)-dihydroquercetin. Not inhibited by salt. Positive cooperativity with NADPH acting as cosubstrate and modulator. Functionally, involved in the biosynthesis of condensed tannins. Converts cyanidin into (-)-epicatechin as the major product. In Arabidopsis thaliana (Mouse-ear cress), this protein is Anthocyanidin reductase (BAN).